Consider the following 271-residue polypeptide: Putative hydro-lyase blr2921 (271 aa).

This sequence belongs to the D-glutamate cyclase family.

The sequence is that of Putative hydro-lyase blr2921 from Bradyrhizobium diazoefficiens (strain JCM 10833 / BCRC 13528 / IAM 13628 / NBRC 14792 / USDA 110).